The sequence spans 224 residues: Proteasome subunit beta (224 aa).

Positions methionine 1–glycine 6 are cleaved as a propeptide — removed in mature form; by autocatalysis. Threonine 7 (nucleophile) is an active-site residue.

It belongs to the peptidase T1B family. As to quaternary structure, the 20S proteasome core is composed of 14 alpha and 14 beta subunits that assemble into four stacked heptameric rings, resulting in a barrel-shaped structure. The two inner rings, each composed of seven catalytic beta subunits, are sandwiched by two outer rings, each composed of seven alpha subunits. The catalytic chamber with the active sites is on the inside of the barrel. Has a gated structure, the ends of the cylinder being occluded by the N-termini of the alpha-subunits. Is capped at one or both ends by the proteasome regulatory ATPase, PAN.

Its subcellular location is the cytoplasm. The catalysed reaction is Cleavage of peptide bonds with very broad specificity.. The formation of the proteasomal ATPase PAN-20S proteasome complex, via the docking of the C-termini of PAN into the intersubunit pockets in the alpha-rings, triggers opening of the gate for substrate entry. Interconversion between the open-gate and close-gate conformations leads to a dynamic regulation of the 20S proteasome proteolysis activity. In terms of biological role, component of the proteasome core, a large protease complex with broad specificity involved in protein degradation. The polypeptide is Proteasome subunit beta (Methanocaldococcus fervens (strain DSM 4213 / JCM 15782 / AG86) (Methanococcus fervens)).